The sequence spans 149 residues: 3-hydroxyacyl-[acyl-carrier-protein] dehydratase FabZ (149 aa).

Residue His-53 is part of the active site.

This sequence belongs to the thioester dehydratase family. FabZ subfamily.

It is found in the cytoplasm. It catalyses the reaction a (3R)-hydroxyacyl-[ACP] = a (2E)-enoyl-[ACP] + H2O. Involved in unsaturated fatty acids biosynthesis. Catalyzes the dehydration of short chain beta-hydroxyacyl-ACPs and long chain saturated and unsaturated beta-hydroxyacyl-ACPs. In Polynucleobacter necessarius subsp. necessarius (strain STIR1), this protein is 3-hydroxyacyl-[acyl-carrier-protein] dehydratase FabZ.